A 200-amino-acid chain; its full sequence is Bombinin-like peptides 3 (200 aa).

The or 18 signal peptide spans 1–16 (MNFKYIVAVSILIASA). Phenylalanine amide occurs at positions 68 and 129.

This sequence belongs to the bombinin family. As to expression, expressed by the skin glands.

It is found in the secreted. Has antimicrobial activity, but no hemolytic activity. Preference on killing Gram-negative non-enteric bacteria. The protein is Bombinin-like peptides 3 of Bombina orientalis (Oriental fire-bellied toad).